The sequence spans 340 residues: MEQKLRTLAQEALAALESAKTPEALNDIRVKYLGKKGEVTQLLRGMGALSAEERPRVGQVANEVRASIEQALEERNARVKEAQKEQMLAAETIDVTLPGNQFGLGRMHPLTQVMQEIESIFMGLGFKIAEGPEVELDYYNFEALNLPKDHPARDMQDTFFINPEVLLRTHTSPVQVRTMEKMVPQVPIKIICPGRVYRRDDDATHSPMFHQVEGLVVDKHITFADLKGVLATFARQMFGLDTKTRLRPSYFPFTEPSAEVDISCFNCKGNGCRVCKGSGWLEILGSGMVHPRVLEMSGYNPEEVTGFAFGMGVERIAMLKYGIDDLRLLFDNDLRFLSQF.

E255 lines the Mg(2+) pocket.

It belongs to the class-II aminoacyl-tRNA synthetase family. Phe-tRNA synthetase alpha subunit type 1 subfamily. As to quaternary structure, tetramer of two alpha and two beta subunits. The cofactor is Mg(2+).

Its subcellular location is the cytoplasm. The catalysed reaction is tRNA(Phe) + L-phenylalanine + ATP = L-phenylalanyl-tRNA(Phe) + AMP + diphosphate + H(+). This chain is Phenylalanine--tRNA ligase alpha subunit, found in Desulforamulus reducens (strain ATCC BAA-1160 / DSM 100696 / MI-1) (Desulfotomaculum reducens).